The sequence spans 917 residues: MKKRLVTLLAGLLTVLSMGFGLAQFSDVPAGHWAKEAVEALAAKGIILGFPDGTFRGNENLTRYQAALLIYRLLQQIEEELKTQGTSPTMEALAPEDLEAMIAELKAQPMPEPGMDQAALKDLMDRVEAASIAADTALAQAQQLAERLDALAQDVEGVKGDLAGLRSQVEANADAIQALNELAVLLNQDVLSLQDRVTALEKMVSGGQELPDLEQFATKEDVAAVQEFAAALRSDLVGLSEKVSKLEGTVGDLSGKVATLQRNAFTISGSLSLNYSVYRAWGPDASAAGPGTANTFDIDRLFSSKFSTGDGNGNGSVGDEADLGKNTEGVTNATLSVSFSTGKLDAASDPGKLNSYPGLVQFSLRAKLTNPGKYDPSTGAPTYPINLTLDEFSSTLAVAKDQTLSFSFGRSVRSKFTEYVFDNDYNSRGHGFVATYKPGLLGATLTGVYGSKGANNGDFTYFRGARLALSPVEGIALGGSFVQEGLDANQGTTSASFPAPTTVYGVDASVKLGPVGLAGEYFNSDAAPNANGYYVKADVALGSISVAGNYRNIGAGVTGANMLSGDATSTLDQGGWGGVDSSGNVINGAPFRSNRQGFGVSASAGLGPITVKGYYDSSTVLANETITNSYGAFNYSANNQLVAYGGQADLAFGGFTLSGFYRIAQLNGSTTRYILTEKPAEAVYASEYGAKLAHDGASKDALVPKLNFTAAYTQKYDNATSGFTTQDIAVYGSYELALGPLTLKPMGRYHTQDAAAASTSSDYTTVKYGVAASIALDLPFKPSLSGEYYARSTQVTSANSGSSATGTISESKYAVGLKLGEFLFKNSSVEAKYASYTGSGLNAPILLGVADAASSTTSDYLYNNAVSSVGSNRGSVTGWYFTWTYWDLTFAYVEADVNNNGNQTHGQAFKISYTVKF.

Positions 1–23 (MKKRLVTLLAGLLTVLSMGFGLA) are cleaved as a signal peptide. The SLH domain maps to 24–84 (QFSDVPAGHW…QQIEEELKTQ (61 aa)).

As to quaternary structure, homotrimer.

It localises to the cell outer membrane. In terms of biological role, plays an important role in the structural organization and integrity of the cell envelope, bridging the outer membrane to the peptidoglyan layer. Appears to be a nonselective channel. This is Outer membrane protein SlpA (slpA) from Thermus thermophilus (strain ATCC 27634 / DSM 579 / HB8).